A 1158-amino-acid polypeptide reads, in one-letter code: Phospholipid-transporting ATPase 1 (1158 aa).

Basic and acidic residues predominate over residues 1–15 (MDPRKSIDKPPHHDP). The disordered stretch occupies residues 1–30 (MDPRKSIDKPPHHDPILGVSSRWSVSSKDN). The Cytoplasmic segment spans residues 1 to 100 (MDPRKSIDKP…TAKYSVFTFL (100 aa)). A helical membrane pass occupies residues 101-122 (PRNLFEQFHRVAYIYFLVIAVL). Residues 123-127 (NQLPQ) are Extracellular-facing. Residues 128–150 (LAVFGRGASIMPLAFVLLVSAIK) traverse the membrane as a helical segment. Residues 151–329 (DAYEDFRRHR…SRLETRMNLE (179 aa)) are Cytoplasmic-facing. A helical membrane pass occupies residues 330–351 (IILLSLFLIVLCTIAAATAAVW). Over 352–391 (LRTHRDDLDTILFYRRKDYSERPGGKNYKYYGWGWEIFFT) the chain is Extracellular. The chain crosses the membrane as a helical span at residues 392-409 (FFMAVIVYQIMIPISLYI). Over 410–914 (SMELVRIGQA…HGHWNYQRMG (505 aa)) the chain is Cytoplasmic. The active-site 4-aspartylphosphate intermediate is the Asp-457. Mg(2+)-binding residues include Asp-859 and Asp-863. Residues 915-934 (YMILYNFYRNAVFVLILFWY) traverse the membrane as a helical segment. The Extracellular portion of the chain corresponds to 935–948 (VLFTCYTLTTAITE). The chain crosses the membrane as a helical span at residues 949 to 968 (WSSVLYSVIYTAIPTIIIGI). The Cytoplasmic segment spans residues 969–998 (LDKDLGRQTLLDHPQLYGVGQRAEGYSTTL). Residues 999 to 1020 (FWYTMIDTIWQSAAIFFIPMFA) traverse the membrane as a helical segment. Topologically, residues 1021-1027 (YWGSTID) are extracellular. A helical membrane pass occupies residues 1028–1050 (TSSLGDLWTIAAVVVVNLHLAMD). Residues 1051 to 1056 (VIRWNW) lie on the Cytoplasmic side of the membrane. A helical membrane pass occupies residues 1057–1077 (ITHAAIWGSIVAACICVIVID). Residues 1078 to 1090 (VIPTLPGYWAIFQ) are Extracellular-facing. Residues 1091–1115 (VGKTWMFWFCLLAIVVTSLLPRFAI) traverse the membrane as a helical segment. Topologically, residues 1116-1158 (KFLVEYYRPSDVRIAREAEKLGTFRESQPVGVEMNLIQDPPRR) are cytoplasmic.

Belongs to the cation transport ATPase (P-type) (TC 3.A.3) family. Type IV subfamily. In terms of tissue distribution, expressed in roots, flowers, anthers, leaves, vascular tissues and stems.

The protein localises to the endoplasmic reticulum membrane. Its subcellular location is the cell membrane. The enzyme catalyses ATP + H2O + phospholipidSide 1 = ADP + phosphate + phospholipidSide 2.. Its function is as follows. Involved in transport of phospholipids. Contributes to transmembrane flipping of lipids. Has activity with phosphatidylserine and with a much lower efficiency with phosphatidylethanolamine, but not with phosphatidylcholine. The sequence is that of Phospholipid-transporting ATPase 1 from Arabidopsis thaliana (Mouse-ear cress).